Reading from the N-terminus, the 248-residue chain is Ubiquinone biosynthesis O-methyltransferase (248 aa).

Positions 41, 72, 93, and 136 each coordinate S-adenosyl-L-methionine.

It belongs to the methyltransferase superfamily. UbiG/COQ3 family.

It catalyses the reaction a 3-demethylubiquinol + S-adenosyl-L-methionine = a ubiquinol + S-adenosyl-L-homocysteine + H(+). The catalysed reaction is a 3-(all-trans-polyprenyl)benzene-1,2-diol + S-adenosyl-L-methionine = a 2-methoxy-6-(all-trans-polyprenyl)phenol + S-adenosyl-L-homocysteine + H(+). The protein operates within cofactor biosynthesis; ubiquinone biosynthesis. Functionally, O-methyltransferase that catalyzes the 2 O-methylation steps in the ubiquinone biosynthetic pathway. The sequence is that of Ubiquinone biosynthesis O-methyltransferase from Brucella abortus (strain 2308).